Reading from the N-terminus, the 332-residue chain is Glycerol-3-phosphate dehydrogenase [NAD(P)+] (332 aa).

NADPH contacts are provided by Trp-11, Arg-30, and Lys-108. Positions 108, 137, and 139 each coordinate sn-glycerol 3-phosphate. Ala-141 provides a ligand contact to NADPH. Residues Lys-192, Asp-245, Ser-255, Arg-256, and Asn-257 each coordinate sn-glycerol 3-phosphate. Catalysis depends on Lys-192, which acts as the Proton acceptor. Residue Arg-256 coordinates NADPH. The NADPH site is built by Val-280 and Glu-282.

It belongs to the NAD-dependent glycerol-3-phosphate dehydrogenase family.

The protein localises to the cytoplasm. It catalyses the reaction sn-glycerol 3-phosphate + NAD(+) = dihydroxyacetone phosphate + NADH + H(+). The catalysed reaction is sn-glycerol 3-phosphate + NADP(+) = dihydroxyacetone phosphate + NADPH + H(+). It participates in membrane lipid metabolism; glycerophospholipid metabolism. Functionally, catalyzes the reduction of the glycolytic intermediate dihydroxyacetone phosphate (DHAP) to sn-glycerol 3-phosphate (G3P), the key precursor for phospholipid synthesis. This chain is Glycerol-3-phosphate dehydrogenase [NAD(P)+], found in Burkholderia thailandensis (strain ATCC 700388 / DSM 13276 / CCUG 48851 / CIP 106301 / E264).